We begin with the raw amino-acid sequence, 173 residues long: SPbeta prophage-derived putative HNH homing endonuclease YosQ (173 aa).

In terms of biological role, a possible homing endonuclease, it is entirely encoded within the YosP intron. This chain is SPbeta prophage-derived putative HNH homing endonuclease YosQ (yosQ), found in Bacillus subtilis (strain 168).